A 261-amino-acid chain; its full sequence is Glucose 1-dehydrogenase (261 aa).

11–35 (AITGAASGLGKAMAIRFGKEQAKVV) serves as a coordination point for NADP(+). Position 145 (S145) interacts with substrate. The active-site Proton acceptor is the Y158.

The protein belongs to the short-chain dehydrogenases/reductases (SDR) family. As to quaternary structure, homotetramer.

The enzyme catalyses D-glucose + NAD(+) = D-glucono-1,5-lactone + NADH + H(+). The catalysed reaction is D-glucose + NADP(+) = D-glucono-1,5-lactone + NADPH + H(+). The polypeptide is Glucose 1-dehydrogenase (gdh) (Bacillus subtilis (strain 168)).